The following is an 84-amino-acid chain: Small ribosomal subunit protein bS20 (84 aa).

Belongs to the bacterial ribosomal protein bS20 family.

Binds directly to 16S ribosomal RNA. This Lactiplantibacillus plantarum (strain ATCC BAA-793 / NCIMB 8826 / WCFS1) (Lactobacillus plantarum) protein is Small ribosomal subunit protein bS20.